A 308-amino-acid polypeptide reads, in one-letter code: Protein translocase subunit SecF (308 aa).

The next 6 membrane-spanning stretches (helical) occupy residues 18 to 38, 134 to 154, 160 to 180, 193 to 213, 244 to 264, and 272 to 292; these read AYVFSGVLILLSLVSLVTRGL, GAIYSILGALLVIFVYILIRF, LGAVVALFHDVLITLGLFSLL, TIIAAFLTIVGYSLNDTVVVF, IITSGTTLLVVVILFIFGGEV, and LIVGIVIGTYSSIFVASPVVI.

It belongs to the SecD/SecF family. SecF subfamily. In terms of assembly, forms a complex with SecD. Part of the essential Sec protein translocation apparatus which comprises SecA, SecYEG and auxiliary proteins SecDF. Other proteins may also be involved.

It localises to the cell inner membrane. Part of the Sec protein translocase complex. Interacts with the SecYEG preprotein conducting channel. SecDF uses the proton motive force (PMF) to complete protein translocation after the ATP-dependent function of SecA. The sequence is that of Protein translocase subunit SecF from Rhodothermus marinus (strain ATCC 43812 / DSM 4252 / R-10) (Rhodothermus obamensis).